The sequence spans 441 residues: L-seryl-tRNA(Sec) selenium transferase (441 aa).

Lys-283 bears the N6-(pyridoxal phosphate)lysine mark.

Belongs to the SelA family. Requires pyridoxal 5'-phosphate as cofactor.

The protein localises to the cytoplasm. It catalyses the reaction L-seryl-tRNA(Sec) + selenophosphate + H(+) = L-selenocysteinyl-tRNA(Sec) + phosphate. Its pathway is aminoacyl-tRNA biosynthesis; selenocysteinyl-tRNA(Sec) biosynthesis; selenocysteinyl-tRNA(Sec) from L-seryl-tRNA(Sec) (bacterial route): step 1/1. Functionally, converts seryl-tRNA(Sec) to selenocysteinyl-tRNA(Sec) required for selenoprotein biosynthesis. The sequence is that of L-seryl-tRNA(Sec) selenium transferase from Campylobacter concisus (strain 13826).